Here is a 311-residue protein sequence, read N- to C-terminus: MYKQGEPNLWTGRLDSETDPKKFRHFQTVTFEDLSKLEKSSMPSGVGILGYAVDKGVALNKGRIGAKEGPDAIKQAFAGLPDLNQCETLVDYGNVYHDHEELIDTQKEFAMLAAKSIANHRQTFLLGGGHDIAYAQYLATRKVYPTQSIGVINIDAHFDTRAEQESTSGTSFRQILEEDDNTDYLVLGIAQGGNTQSLFDYAKEKKIDYVFADELLNHVSPPIKDMIERFVHEHDVIMFTICMDVIDSAFAPGVSAPAVLGLYPHTVLELAKRIIPSDKVSSVSIAEMNPTYDADNRTAKLVANLVHHFLK.

Histidine 130, aspartate 155, histidine 157, aspartate 159, cysteine 242, and aspartate 244 together coordinate Mn(2+).

The protein belongs to the arginase family. The cofactor is Mn(2+).

It carries out the reaction N-formimidoyl-L-glutamate + H2O = formamide + L-glutamate. The protein operates within amino-acid degradation; L-histidine degradation into L-glutamate; L-glutamate from N-formimidoyl-L-glutamate (hydrolase route): step 1/1. Functionally, catalyzes the conversion of N-formimidoyl-L-glutamate to L-glutamate and formamide. The protein is Formimidoylglutamase of Staphylococcus aureus (strain MSSA476).